The following is a 375-amino-acid chain: Probable protein-glutamate methylesterase BB_0415 (375 aa).

The region spanning 6–120 (SVLIIEYFAV…SHEIKKEQII (115 aa)) is the Response regulatory domain. Residues 183–375 (KLRKFDIIAI…KLLKAILINS (193 aa)) form the CheB-type methylesterase domain. Active-site residues include serine 195, histidine 221, and aspartate 317.

The enzyme catalyses [protein]-L-glutamate 5-O-methyl ester + H2O = L-glutamyl-[protein] + methanol + H(+). This chain is Probable protein-glutamate methylesterase BB_0415, found in Borreliella burgdorferi (strain ATCC 35210 / DSM 4680 / CIP 102532 / B31) (Borrelia burgdorferi).